Consider the following 298-residue polypeptide: GPN-loop GTPase QQT1 (298 aa).

Residue glycine 12–threonine 17 participates in GTP binding. The Gly-Pro-Asn (GPN)-loop; involved in dimer interface motif lies at glycine 69–asparagine 71. Serine 173–aspartate 176 contributes to the GTP binding site.

The protein belongs to the GPN-loop GTPase family. Heterodimer with QQT2. As to expression, expressed in vascular tissues, root tips, apical and root meristematic regions, and floral primordia.

The protein resides in the cytoplasm. It localises to the nucleus. Its subcellular location is the cytoskeleton. The protein localises to the spindle. It is found in the phragmoplast. Functionally, small GTPase that is essential for the correct formation of the tangential divisions in early embryos. Associates with microtubule during mitosis and may function in the positioning of the division plane. May participate in the patterning of the early embryo at the octant-dermatogen transition. Is crucial for normal development of the plant. The sequence is that of GPN-loop GTPase QQT1 from Arabidopsis thaliana (Mouse-ear cress).